The sequence spans 478 residues: Bifunctional protein HldE (478 aa).

Residues 1–318 form a ribokinase region; the sequence is MKVTLPDFRQ…ENAIRGRADT (318 aa). 195–198 contributes to the ATP binding site; that stretch reads NLSE. D264 is an active-site residue. A cytidylyltransferase region spans residues 344 to 478; sequence MTNGCFDILH…NMIKASTSQS (135 aa).

The protein in the N-terminal section; belongs to the carbohydrate kinase PfkB family. This sequence in the C-terminal section; belongs to the cytidylyltransferase family. As to quaternary structure, homodimer.

The enzyme catalyses D-glycero-beta-D-manno-heptose 7-phosphate + ATP = D-glycero-beta-D-manno-heptose 1,7-bisphosphate + ADP + H(+). It catalyses the reaction D-glycero-beta-D-manno-heptose 1-phosphate + ATP + H(+) = ADP-D-glycero-beta-D-manno-heptose + diphosphate. Its pathway is nucleotide-sugar biosynthesis; ADP-L-glycero-beta-D-manno-heptose biosynthesis; ADP-L-glycero-beta-D-manno-heptose from D-glycero-beta-D-manno-heptose 7-phosphate: step 1/4. It functions in the pathway nucleotide-sugar biosynthesis; ADP-L-glycero-beta-D-manno-heptose biosynthesis; ADP-L-glycero-beta-D-manno-heptose from D-glycero-beta-D-manno-heptose 7-phosphate: step 3/4. Its function is as follows. Catalyzes the phosphorylation of D-glycero-D-manno-heptose 7-phosphate at the C-1 position to selectively form D-glycero-beta-D-manno-heptose-1,7-bisphosphate. Catalyzes the ADP transfer from ATP to D-glycero-beta-D-manno-heptose 1-phosphate, yielding ADP-D-glycero-beta-D-manno-heptose. The chain is Bifunctional protein HldE from Pectobacterium atrosepticum (strain SCRI 1043 / ATCC BAA-672) (Erwinia carotovora subsp. atroseptica).